Reading from the N-terminus, the 285-residue chain is MSGNLDVLSLKEDDVTKMLAATTHIGSTSVNFQMEQYVYKRRTDGVHIINLGRTYEKLLLAARCIASIEYPGEVFAISSRPYGQRAVLKYAHYTQATPIAGRFTPGAFTNQIQTTFREPRLLIVTDPLTDHQPVTEASYVNIPVIAFCNTDSPVKFVDIAIPCNTKSTHSIGLMWWMLAREVLRLRGKITHDRWEVMPDLFFFRDPEEAEKEQAAIEAAAPVIKDVPDEVVVADEPTTWGEDVTQTAMAVPQAKPLAVAGANDDWNEDDTAPAAPGAASWGGAAF.

The tract at residues 262–285 is disordered; that stretch reads NDDWNEDDTAPAAPGAASWGGAAF. The segment covering 271 to 285 has biased composition (low complexity); it reads APAAPGAASWGGAAF.

The protein belongs to the universal ribosomal protein uS2 family. Component of the small ribosomal subunit. Mature ribosomes consist of a small (40S) and a large (60S) subunit. The 40S subunit contains about 33 different proteins and 1 molecule of RNA (18S). The 60S subunit contains about 49 different proteins and 3 molecules of RNA (28S, 5.8S and 5S). Interacts with ribosomal protein S21.

Its subcellular location is the cytoplasm. Its function is as follows. Required for the assembly and/or stability of the 40S ribosomal subunit. Required for the processing of the 20S rRNA-precursor to mature 18S rRNA in a late step of the maturation of 40S ribosomal subunits. This is Small ribosomal subunit protein uS2 from Anopheles gambiae (African malaria mosquito).